Reading from the N-terminus, the 628-residue chain is 1-deoxy-D-xylulose-5-phosphate synthase (628 aa).

Residues His72 and 113–115 (GHS) contribute to the thiamine diphosphate site. Asp144 contributes to the Mg(2+) binding site. Thiamine diphosphate-binding positions include 145–146 (GA), Asn173, Tyr284, and Glu367. Asn173 contributes to the Mg(2+) binding site.

The protein belongs to the transketolase family. DXPS subfamily. In terms of assembly, homodimer. Mg(2+) is required as a cofactor. Thiamine diphosphate serves as cofactor.

It catalyses the reaction D-glyceraldehyde 3-phosphate + pyruvate + H(+) = 1-deoxy-D-xylulose 5-phosphate + CO2. The protein operates within metabolic intermediate biosynthesis; 1-deoxy-D-xylulose 5-phosphate biosynthesis; 1-deoxy-D-xylulose 5-phosphate from D-glyceraldehyde 3-phosphate and pyruvate: step 1/1. In terms of biological role, catalyzes the acyloin condensation reaction between C atoms 2 and 3 of pyruvate and glyceraldehyde 3-phosphate to yield 1-deoxy-D-xylulose-5-phosphate (DXP). This is 1-deoxy-D-xylulose-5-phosphate synthase from Exiguobacterium sibiricum (strain DSM 17290 / CCUG 55495 / CIP 109462 / JCM 13490 / 255-15).